A 702-amino-acid chain; its full sequence is Polyribonucleotide nucleotidyltransferase (702 aa).

The Mg(2+) site is built by D487 and D493. Residues 554 to 613 form the KH domain; it reads PRLLTIKIHPDKIREVIGKGGSTIQAITKETGTQIDIQDDGTIVIASVNAIAAQAAKARI. An S1 motif domain is found at 623–691; the sequence is GRIYEGKVAK…KQGRIRLSMK (69 aa).

Belongs to the polyribonucleotide nucleotidyltransferase family. Component of the RNA degradosome, which is a multiprotein complex involved in RNA processing and mRNA degradation. Requires Mg(2+) as cofactor.

The protein localises to the cytoplasm. It catalyses the reaction RNA(n+1) + phosphate = RNA(n) + a ribonucleoside 5'-diphosphate. Its function is as follows. Involved in mRNA degradation. Catalyzes the phosphorolysis of single-stranded polyribonucleotides processively in the 3'- to 5'-direction. In Stenotrophomonas maltophilia (strain K279a), this protein is Polyribonucleotide nucleotidyltransferase.